The following is a 713-amino-acid chain: Constitutive lysine decarboxylase (713 aa).

Lys367 carries the N6-(pyridoxal phosphate)lysine modification.

This sequence belongs to the Orn/Lys/Arg decarboxylase class-I family. Homodecamer; built of five dimers associated in a 5-fold symmetrical double-ring. It depends on pyridoxal 5'-phosphate as a cofactor.

It catalyses the reaction L-lysine + H(+) = cadaverine + CO2. Plays a role in lysine utilization by acting as a lysine decarboxylase. The polypeptide is Constitutive lysine decarboxylase (ldcC) (Escherichia coli (strain K12)).